We begin with the raw amino-acid sequence, 779 residues long: Mediator of RNA polymerase II transcription subunit 15 (779 aa).

Composition is skewed to polar residues over residues 70 to 90 (NKNQ…NQQG) and 98 to 108 (ALQTLATQGTR). Disordered stretches follow at residues 70 to 131 (NKNQ…GGNA), 209 to 407 (NPMQ…VPIG), 437 to 512 (FLRQ…NPQE), and 629 to 649 (PAKQ…TGSQ). The segment covering 114-130 (GQMGPGGPMGNQMGGGN) has biased composition (gly residues). Composition is skewed to low complexity over residues 209-232 (NPMQ…QPQG) and 240-270 (PNQM…QMNQ). Residues 274–284 (SSGGNQMGNLG) show a composition bias toward gly residues. Low complexity-rich tracts occupy residues 285-295 (GNSPMNPGNMG), 304-329 (QQMP…QMNQ), and 339-350 (GPVQQQQQPGQV). A compositionally biased stretch (gly residues) spans 351 to 361 (GMAGMGPGGPG). Low complexity-rich tracts occupy residues 362–383 (NLQQ…APGQ), 393–402 (NMQAMGNQGN), and 451–468 (GPGS…IPSP). Polar residues-rich tracts occupy residues 477–500 (QVSS…NTPG) and 640–649 (PSTSGSTGSQ).

This sequence belongs to the Mediator complex subunit 15 family. Component of the Mediator complex.

It localises to the nucleus. Functionally, component of the Mediator complex, a coactivator involved in the regulated transcription of nearly all RNA polymerase II-dependent genes. Mediator functions as a bridge to convey information from gene-specific regulatory proteins to the basal RNA polymerase II transcription machinery. Mediator is recruited to promoters by direct interactions with regulatory proteins and serves as a scaffold for the assembly of a functional preinitiation complex with RNA polymerase II and the general transcription factors. The protein is Mediator of RNA polymerase II transcription subunit 15 (MED15) of Aedes aegypti (Yellowfever mosquito).